The primary structure comprises 300 residues: N-acetylmannosamine kinase (300 aa).

ATP is bound by residues 5 to 12 and 132 to 139; these read ALDIGGTK and GVGGGIVL. His156, Cys166, Cys168, and Cys173 together coordinate Zn(2+).

It belongs to the ROK (NagC/XylR) family. NanK subfamily. As to quaternary structure, homodimer.

It catalyses the reaction an N-acyl-D-mannosamine + ATP = an N-acyl-D-mannosamine 6-phosphate + ADP + H(+). Its pathway is amino-sugar metabolism; N-acetylneuraminate degradation; D-fructose 6-phosphate from N-acetylneuraminate: step 2/5. In terms of biological role, catalyzes the phosphorylation of N-acetylmannosamine (ManNAc) to ManNAc-6-P. This Haemophilus influenzae (strain PittGG) protein is N-acetylmannosamine kinase.